The following is an 835-amino-acid chain: MVDAITEFVVGKIGNYLIEEASMFMAVKEDLEELKTELTCIHGYLKDVEAREREDEVSKEWSKLVLDFAYDVEDVLDTYHLKLEERSQRRGLRRLTNKIGRKMDAYSIVDDIRILKRRILDITRKRETYGIGGLKEPQGGGNTSSLRVRQLRRARSVDQEEVVVGLEDDAKILLEKLLDYEEKNRFIISIFGMGGLGKTALARKLYNSRDVKERFEYRAWTYVSQEYKTGDILMRIIRSLGMTSGEELEKIRKFAEEELEVYLYGLLEGKKYLVVVDDIWEREAWDSLKRALPCNHEGSRVIITTRIKAVAEGVDGRFYAHKLRFLTFEESWELFEQRAFRNIQRKDEDLLKTGKEMVQKCRGLPLCIVVLAGLLSRKTPSEWNDVCNSLWRRLKDDSIHVAPIVFDLSFKELRHESKLCFLYLSIFPEDYEIDLEKLIHLLVAEGFIQGDEEMMMEDVARYYIEELIDRSLLEAVRRERGKVMSCRIHDLLRDVAIKKSKELNFVNVYNDHVAQHSSTTCRREVVHHQFKRYSSEKRKNKRMRSFLYFGEFDHLVGLDFETLKLLRVLDFGSLWLPFKINGDLIHLRYLGIDGNSINDFDIAAIISKLRFLQTLFVSDNYFIEETIDLRKLTSLRHVIGNFFGGLLIGDVANLQTLTSISFDSWNKLKPELLINLRDLGISEMSRSKERRVHVSWASLTKLESLRVLKLATPTEVHLSLESEEAVRSMDVISRSLESVTLVGITFEEDPMPFLQKMPRLEDLILLSCNYSGKMSVSEQGFGRLRKLDLLMRSLDELQIEEEAMPNLIELEISVSKRETKLIIPNRLRAFGQIYC.

The stretch at M25 to I41 forms a coiled coil. The NB-ARC domain maps to S144–E453. G192–T199 contacts ATP.

It belongs to the disease resistance NB-LRR family. RPP13 subfamily.

Its function is as follows. Disease resistance protein. Resistance proteins guard the plant against pathogens that contain an appropriate avirulence protein via an indirect interaction with this avirulence protein. That triggers a defense system including the hypersensitive response, which restricts the pathogen growth. In contrast to other resistance proteins, it works independently of ESD1 and NSD1 proteins and does not require the accumulation of salicylic acid, suggesting the existence of an independent signaling pathway. The specificity to avirulence proteins differs in the different cultivars. This chain is Disease resistance protein RPP13 (RPP13), found in Arabidopsis thaliana (Mouse-ear cress).